Reading from the N-terminus, the 340-residue chain is Probable serine acetyltransferase 5 (340 aa).

Composition is skewed to low complexity over residues 1 to 17 (MLVV…RVAA) and 54 to 64 (PAEVVPAFAPP). Residues 1 to 67 (MLVVVARKSS…VPAFAPPESE (67 aa)) are disordered.

It belongs to the transferase hexapeptide repeat family. Homomultimer.

The enzyme catalyses L-serine + acetyl-CoA = O-acetyl-L-serine + CoA. It functions in the pathway amino-acid biosynthesis; L-cysteine biosynthesis; L-cysteine from L-serine: step 1/2. This Oryza sativa subsp. japonica (Rice) protein is Probable serine acetyltransferase 5 (SAT5).